We begin with the raw amino-acid sequence, 466 residues long: MAEGTVLQVIGPIVDVQFPDNKKLPDINNALKVQRIDGSELTIEVSIDLGDSVVRTIAMDSTDGLTRGMKVLDTGAPIEVPVGEATLGRVFNVLGEPVDGGDPIPNSVDRHPIHRSAPKYDELATSTEVLETGIKVIDLLEPYLRGGKTGLFGGAGVGKTVLIQELIHNIAQGHNGISVFTGVGERTREGNDMYYEMKASGVLKNTAMVYGQMNEPPGARMRVGLTGLTMAEDFRDQEGKDVLLFIDNIFRFTQAGSEVSALLGRIPSAVGYQPTLATEMGQLQERITSTKKGSVTSIQAVYVPADDYTDPAPATTFAHLDATTNLERSLTQQGIYPAVDPLESTSSALTPDIVGEDHYEVATQVQHFLQRYKELQDIISILGMDELSDEEKTIVNRARRIQFFLSQPFSVAEQFTGVPGQYVPVEDTVRGFKEILDGKHDDLPEEAFRNVGTIEQAVEKAKKLES.

Position 153-160 (153-160 (GGAGVGKT)) interacts with ATP.

It belongs to the ATPase alpha/beta chains family. F-type ATPases have 2 components, CF(1) - the catalytic core - and CF(0) - the membrane proton channel. CF(1) has five subunits: alpha(3), beta(3), gamma(1), delta(1), epsilon(1). CF(0) has three main subunits: a(1), b(2) and c(9-12). The alpha and beta chains form an alternating ring which encloses part of the gamma chain. CF(1) is attached to CF(0) by a central stalk formed by the gamma and epsilon chains, while a peripheral stalk is formed by the delta and b chains.

The protein localises to the cell membrane. It catalyses the reaction ATP + H2O + 4 H(+)(in) = ADP + phosphate + 5 H(+)(out). Its function is as follows. Produces ATP from ADP in the presence of a proton gradient across the membrane. The catalytic sites are hosted primarily by the beta subunits. The sequence is that of ATP synthase subunit beta from Oenococcus oeni (strain ATCC BAA-331 / PSU-1).